The following is a 328-amino-acid chain: Probable cell division protein WhiA (328 aa).

Residues 275 to 308 (SLEELGRLAEPPMTKDAVAGRIRRLLSMADKRAE) constitute a DNA-binding region (H-T-H motif).

Belongs to the WhiA family.

Its function is as follows. Involved in cell division and chromosome segregation. The protein is Probable cell division protein WhiA of Corynebacterium jeikeium (strain K411).